A 555-amino-acid polypeptide reads, in one-letter code: 2-isopropylmalate synthase (555 aa).

The region spanning 30 to 303 (PIWCSVDLRD…DPGLDCTDIN (274 aa)) is the Pyruvate carboxyltransferase domain. Positions 39, 242, 244, and 278 each coordinate Mg(2+). The tract at residues 437–555 (QPDARIKFVD…VSAANRVIAK (119 aa)) is regulatory domain.

The protein belongs to the alpha-IPM synthase/homocitrate synthase family. LeuA type 2 subfamily. Homodimer. Mg(2+) is required as a cofactor.

It is found in the cytoplasm. The enzyme catalyses 3-methyl-2-oxobutanoate + acetyl-CoA + H2O = (2S)-2-isopropylmalate + CoA + H(+). The protein operates within amino-acid biosynthesis; L-leucine biosynthesis; L-leucine from 3-methyl-2-oxobutanoate: step 1/4. Its function is as follows. Catalyzes the condensation of the acetyl group of acetyl-CoA with 3-methyl-2-oxobutanoate (2-ketoisovalerate) to form 3-carboxy-3-hydroxy-4-methylpentanoate (2-isopropylmalate). The polypeptide is 2-isopropylmalate synthase (Brucella suis biovar 1 (strain 1330)).